The chain runs to 223 residues: RNA-free ribonuclease P (223 aa).

It belongs to the HARP family.

It carries out the reaction Endonucleolytic cleavage of RNA, removing 5'-extranucleotides from tRNA precursor.. Its function is as follows. RNA-free RNase P that catalyzes the removal of the 5'-leader sequence from pre-tRNA to produce the mature 5'-terminus. This is RNA-free ribonuclease P from Methanococcus maripaludis (strain C5 / ATCC BAA-1333).